The sequence spans 442 residues: Proline--tRNA ligase (442 aa).

This sequence belongs to the class-II aminoacyl-tRNA synthetase family. ProS type 2 subfamily. As to quaternary structure, homodimer.

The protein localises to the cytoplasm. It catalyses the reaction tRNA(Pro) + L-proline + ATP = L-prolyl-tRNA(Pro) + AMP + diphosphate. Functionally, catalyzes the attachment of proline to tRNA(Pro) in a two-step reaction: proline is first activated by ATP to form Pro-AMP and then transferred to the acceptor end of tRNA(Pro). This Sinorhizobium medicae (strain WSM419) (Ensifer medicae) protein is Proline--tRNA ligase.